The primary structure comprises 209 residues: Dehydration-responsive element-binding protein 1F (209 aa).

Positions 14–26 (KKRAGRRVFKETR) match the Nuclear localization signal motif. A DNA-binding region (AP2/ERF) is located at residues 29–86 (VYRGIRRRNGDKWVCEVREPTHQRRIWLGTYPTADMAARAHDVAVLALRGRSACLNFA). Residues 137–157 (FGSGSGSGSGSEERNSSSYGF) form a disordered region.

The protein belongs to the AP2/ERF transcription factor family. ERF subfamily.

The protein localises to the nucleus. In terms of biological role, transcriptional activator that binds specifically to the DNA sequence 5'-[AG]CCGAC-3'. Binding to the C-repeat/DRE element mediates cold or dehydration-inducible transcription. CBF/DREB1 factors play a key role in freezing tolerance and cold acclimation. This Arabidopsis thaliana (Mouse-ear cress) protein is Dehydration-responsive element-binding protein 1F (DREB1F).